The primary structure comprises 528 residues: Na(+)/H(+) antiporter NhaB (528 aa).

10 consecutive transmembrane segments (helical) span residues 11 to 31, 67 to 87, 98 to 118, 140 to 160, 240 to 260, 311 to 331, 350 to 370, 391 to 411, 449 to 469, and 476 to 496; these read VNFL…FLVI, PGGL…SQVL, LLLI…LFVF, AFLS…AVGI, FFIR…LTCV, LVAG…SVII, EEAL…GVII, LVVF…VFVG, ATPN…APLI, and MVIM…VTIE.

This sequence belongs to the NhaB Na(+)/H(+) (TC 2.A.34) antiporter family.

It localises to the cell inner membrane. It catalyses the reaction 2 Na(+)(in) + 3 H(+)(out) = 2 Na(+)(out) + 3 H(+)(in). In terms of biological role, na(+)/H(+) antiporter that extrudes sodium in exchange for external protons. The protein is Na(+)/H(+) antiporter NhaB of Shewanella denitrificans (strain OS217 / ATCC BAA-1090 / DSM 15013).